We begin with the raw amino-acid sequence, 835 residues long: Leucine--tRNA ligase (835 aa).

The 'HIGH' region motif lies at 36–46 (PYPSGKIHVGH). The short motif at 602-606 (KMSKS) is the 'KMSKS' region element. Residue Lys605 participates in ATP binding.

It belongs to the class-I aminoacyl-tRNA synthetase family.

It localises to the cytoplasm. It catalyses the reaction tRNA(Leu) + L-leucine + ATP = L-leucyl-tRNA(Leu) + AMP + diphosphate. The polypeptide is Leucine--tRNA ligase (Rickettsia africae (strain ESF-5)).